Reading from the N-terminus, the 207-residue chain is N-(5'-phosphoribosyl)anthranilate isomerase (207 aa).

Belongs to the TrpF family.

The enzyme catalyses N-(5-phospho-beta-D-ribosyl)anthranilate = 1-(2-carboxyphenylamino)-1-deoxy-D-ribulose 5-phosphate. It participates in amino-acid biosynthesis; L-tryptophan biosynthesis; L-tryptophan from chorismate: step 3/5. This chain is N-(5'-phosphoribosyl)anthranilate isomerase, found in Legionella pneumophila (strain Paris).